The chain runs to 361 residues: 4-oxalomesaconate tautomerase (361 aa).

It belongs to the PrpF family.

The enzyme catalyses (1E)-4-oxobut-1-ene-1,2,4-tricarboxylate = 4-carboxy-2-hydroxy-cis,cis-muconate. In terms of biological role, catalyzes the tautomerization of the 4-oxalomesaconic acid keto (OMAketo) generated by GalA dioxygenase to 4-oxalomesaconic acid enol (OMAenol). Mediates the second step in gallate degradation pathway. The protein is 4-oxalomesaconate tautomerase (galD) of Pseudomonas putida (strain ATCC 47054 / DSM 6125 / CFBP 8728 / NCIMB 11950 / KT2440).